We begin with the raw amino-acid sequence, 951 residues long: Zinc fingers and homeoboxes protein 3 (951 aa).

The interval 1–66 is disordered; that stretch reads MASKRKSTTP…SSTDGSALAN (66 aa). The segment covering 42-58 has biased composition (low complexity); that stretch reads PSEAPEASSEAAPNPSS. 2 C2H2-type zinc fingers span residues 77 to 100 and 109 to 132; these read YSCKECDFRSQDVTHFVGHMTSEH and FVCTGCSFLAKTPEGLSLHNAKCH. Positions 198-249 are disordered; that stretch reads KENAPTQPGGEALPKPLAGETEGKEGDHTFINGATPVSQASANSTKPPHTAN. Over residues 232–244 the composition is skewed to polar residues; the sequence is TPVSQASANSTKP. The segment at 237 to 481 is required for homodimerization and interaction with NFYA; sequence ASANSTKPPH…LLTACPSITS (245 aa). Residues 297-495 are required for repressor activity; that stretch reads LSSIPTYNAA…DANIYKNKKS (199 aa). DNA-binding regions (homeobox) lie at residues 298 to 357 and 487 to 546; these read SSIP…GISW and ANIY…RNLK. Residues 490–548 form a required for nuclear localization region; it reads YKNKKSHEQLSALKGSFCRNQFPGQSEVEHLTKVTGLSTREVRKWFSDRRYHCRNLKGT. S597 carries the phosphoserine modification. The segment at residues 605–664 is a DNA-binding region (homeobox 3); that stretch reads TPTKYKERAPEQLRVLESSFAQNPLPPEEELDRLRSETKMTRREIDGWFSERRKRVNAEE. 2 disordered regions span residues 621–642 and 661–702; these read ESSFAQNPLPPEEELDRLRSET and NAEE…NGSS. Over residues 661–674 the composition is skewed to basic and acidic residues; it reads NAEETKKADGHAPQ. The segment covering 675 to 690 has biased composition (acidic residues); it reads EEAEGAEEEGRDEELA. Residues S701 and S716 each carry the phosphoserine modification. 2 consecutive DNA-binding regions (homeobox) follow at residues 759-818 and 830-889; these read PSRV…KNGQ and FPPG…TRAV. The segment at 885-951 is disordered; that stretch reads ETRAVADTSS…PQSGRQLETD (67 aa). Residues S922 and S941 each carry the phosphoserine modification. The segment covering 937 to 951 has biased composition (polar residues); it reads FDTSSPQSGRQLETD.

Belongs to the ZHX family. Homodimer (via homeobox domain 1). Heterodimer with ZHX1 (via homeobox domain 1). Heterodimer with ZHX2 (via homeobox domain 1). Heterodimerization with ZHX1 is a prerequisite for repressor activity. Interacts with NFYA. In terms of tissue distribution, widely expressed.

It localises to the cytoplasm. It is found in the nucleus. In terms of biological role, acts as a transcriptional repressor. Involved in the early stages of mesenchymal stem cell (MSC) osteogenic differentiation. Is a regulator of podocyte gene expression during primary glomerula disease. Binds to promoter DNA. The sequence is that of Zinc fingers and homeoboxes protein 3 (Zhx3) from Rattus norvegicus (Rat).